Reading from the N-terminus, the 185-residue chain is Photosystem I assembly protein Ycf4 (185 aa).

A run of 2 helical transmembrane segments spans residues 20-40 (GNFF…AVGA) and 57-77 (ILFF…LFIS).

The protein belongs to the Ycf4 family.

It localises to the plastid. The protein localises to the chloroplast thylakoid membrane. Seems to be required for the assembly of the photosystem I complex. The polypeptide is Photosystem I assembly protein Ycf4 (Oryza nivara (Indian wild rice)).